A 372-amino-acid chain; its full sequence is MQNNKKTVVVGLSGGVDSSVAAYLLKKNYNVIGLFMRNWDSLINNDYLGNREINNDICPQELDYKDAQEIARQLDIPLYRVDFVKEYWDYVFENFISEYKKGRTPNPDILCNKYIKFDLFAKHAFNELKTDYIATGHYAKMKNGELYRASDKNKDQSYFLSQLSKEQLKKVLFPLENLTKDEIRKIAREQNLITAAKKDSTGICFIGERKFAKFLQNYIPAKKGNVLDITNQKIVGEHSGCFYYTIGQRKGLNLGGNKESYYVCGKNVAENIIYVAPSSRPEFLESNSLLASNLNLNTNNFNKKNLSAKFRYRQEDSKVKVEFLENNFVKVYYDKAQAITPGQQVVFYDGEKCIGGAVIEEIYLNDKKLTYL.

ATP is bound by residues 11-18 (GLSGGVDS) and M36. Positions 106 to 108 (NPD) are interaction with target base in tRNA. C111 (nucleophile) is an active-site residue. An intrachain disulfide couples C111 to C204. G136 serves as a coordination point for ATP. Residues 154–156 (KDQ) are interaction with tRNA. Residue C204 is the Cysteine persulfide intermediate of the active site. Residues 311 to 312 (RY) form an interaction with tRNA region.

This sequence belongs to the MnmA/TRMU family.

The protein resides in the cytoplasm. The enzyme catalyses S-sulfanyl-L-cysteinyl-[protein] + uridine(34) in tRNA + AH2 + ATP = 2-thiouridine(34) in tRNA + L-cysteinyl-[protein] + A + AMP + diphosphate + H(+). Catalyzes the 2-thiolation of uridine at the wobble position (U34) of tRNA, leading to the formation of s(2)U34. This chain is tRNA-specific 2-thiouridylase MnmA, found in Mycoplasmopsis synoviae (strain 53) (Mycoplasma synoviae).